A 169-amino-acid polypeptide reads, in one-letter code: Major pepsin inhibitor 3 (169 aa).

A signal peptide spans 1 to 20 (MHVWLILSLASLWTSSIAYS). Q21 is modified (pyrrolidone carboxylic acid). Intrachain disulfides connect C33–C79, C68–C86, and C99–C166. The tract at residues 135 to 169 (EEQQENQPPSSGMPHGAVPAGGLSPPPPPSFCTVQ) is disordered. The segment covering 158–169 (SPPPPPSFCTVQ) has biased composition (pro residues).

It belongs to the protease inhibitor I33 family. In terms of tissue distribution, body wall.

It localises to the secreted. Functionally, this is an inhibitor of the aspartic protease pepsin. The chain is Major pepsin inhibitor 3 from Ascaris suum (Pig roundworm).